Reading from the N-terminus, the 164-residue chain is ATP synthase subunit b (164 aa).

The helical transmembrane segment at 10 to 30 (LLISQIVNFCLLAFLLNTFLY) threads the bilayer.

This sequence belongs to the ATPase B chain family. As to quaternary structure, F-type ATPases have 2 components, F(1) - the catalytic core - and F(0) - the membrane proton channel. F(1) has five subunits: alpha(3), beta(3), gamma(1), delta(1), epsilon(1). F(0) has three main subunits: a(1), b(2) and c(10-14). The alpha and beta chains form an alternating ring which encloses part of the gamma chain. F(1) is attached to F(0) by a central stalk formed by the gamma and epsilon chains, while a peripheral stalk is formed by the delta and b chains.

Its subcellular location is the cell membrane. Functionally, f(1)F(0) ATP synthase produces ATP from ADP in the presence of a proton or sodium gradient. F-type ATPases consist of two structural domains, F(1) containing the extramembraneous catalytic core and F(0) containing the membrane proton channel, linked together by a central stalk and a peripheral stalk. During catalysis, ATP synthesis in the catalytic domain of F(1) is coupled via a rotary mechanism of the central stalk subunits to proton translocation. Its function is as follows. Component of the F(0) channel, it forms part of the peripheral stalk, linking F(1) to F(0). The polypeptide is ATP synthase subunit b (Herpetosiphon aurantiacus (strain ATCC 23779 / DSM 785 / 114-95)).